The primary structure comprises 563 residues: GTPase Obg (563 aa).

The region spanning Ser-2 to Ile-168 is the Obg domain. The 181-residue stretch at Ala-169–His-349 folds into the OBG-type G domain. Residues Gly-175–Ser-182, Phe-200–Val-204, Asp-221–Gly-224, Asn-301–Asp-304, and Ser-330–Ala-332 contribute to the GTP site. Ser-182 and Thr-202 together coordinate Mg(2+). The OCT domain maps to Asp-383–Pro-469. The disordered stretch occupies residues Arg-529–Glu-563.

The protein belongs to the TRAFAC class OBG-HflX-like GTPase superfamily. OBG GTPase family. In terms of assembly, monomer. Requires Mg(2+) as cofactor.

The protein localises to the cytoplasm. An essential GTPase which binds GTP, GDP and possibly (p)ppGpp with moderate affinity, with high nucleotide exchange rates and a fairly low GTP hydrolysis rate. Plays a role in control of the cell cycle, stress response, ribosome biogenesis and in those bacteria that undergo differentiation, in morphogenesis control. This chain is GTPase Obg, found in Bifidobacterium longum (strain NCC 2705).